The sequence spans 495 residues: Telomere-binding protein subunit alpha (495 aa).

The span at 1 to 13 (MSTAAKQNRSTSR) shows a compositional bias: polar residues. The interval 1 to 31 (MSTAAKQNRSTSRVSKKKTAAPKEGAAKKSD) is disordered.

Belongs to the telombin family. As to quaternary structure, heterodimer of an alpha and a beta subunit.

The protein localises to the nucleus. The protein resides in the chromosome. It is found in the telomere. May function as protective capping of the single-stranded telomeric overhang. May also participate in telomere length regulation during DNA replication. Binds specifically to the T4G4-containing extension on the 3'strand and protects this region of the telomere from nuclease digestion and chemical modification. This is Telomere-binding protein subunit alpha (MAC-56A) from Sterkiella nova (Ciliate).